The chain runs to 574 residues: NEDD4-binding protein 2-like 2 (574 aa).

Disordered regions lie at residues 82–110, 127–161, 182–204, and 542–574; these read HKEM…LAPA, YKPP…QKFN, ENEN…QTLS, and TQKS…TDDY. Composition is skewed to basic and acidic residues over residues 129-141 and 149-161; these read PPEK…RKNE and DSKR…QKFN. Positions 162–196 form a coiled coil; it reads SKKLEIDTELSQFYKEIEELENENEASQGSCKEPE. Polar residues predominate over residues 563–574; the sequence is GSHSQVSITDDY.

The chain is NEDD4-binding protein 2-like 2 (N4bp2l2) from Rattus norvegicus (Rat).